A 185-amino-acid polypeptide reads, in one-letter code: Elongation factor P (185 aa).

This sequence belongs to the elongation factor P family.

The protein resides in the cytoplasm. It participates in protein biosynthesis; polypeptide chain elongation. Its function is as follows. Involved in peptide bond synthesis. Stimulates efficient translation and peptide-bond synthesis on native or reconstituted 70S ribosomes in vitro. Probably functions indirectly by altering the affinity of the ribosome for aminoacyl-tRNA, thus increasing their reactivity as acceptors for peptidyl transferase. The protein is Elongation factor P of Moorella thermoacetica (strain ATCC 39073 / JCM 9320).